Consider the following 278-residue polypeptide: uncharacterized protein (278 aa).

10 helical membrane passes run 1-21, 30-50, 56-76, 92-112, 116-136, 146-166, 170-190, 209-229, 230-250, and 258-278; these read MLEILMSLTAAICWAFNGIAY, AFTANFHRTLFATVYFLPLAL, VVIDLQTALVLVISAMLSFYI, IALPASSTYPVYVVLLSTVIY, LSLNALISAILVFVAVYIIYG, LFYALLAAFSWALAILTLDFL, LPVSIVAFVRLLLCLILLSFT, GIFLLLGIMLFITAIKVSSSW, NVVQPSSTSPVFAAIFGAIFL, and LVAGIFVIILAILLLLLPPLQ. EamA domains are found at residues 12–136 and 154–274; these read ICWA…IIYG and FSWA…LLLL.

It belongs to the EamA transporter family.

It localises to the cell membrane. This is an uncharacterized protein from Archaeoglobus fulgidus (strain ATCC 49558 / DSM 4304 / JCM 9628 / NBRC 100126 / VC-16).